The following is a 534-amino-acid chain: Peptide chain release factor 3 (534 aa).

The 270-residue stretch at 9 to 278 folds into the tr-type G domain; that stretch reads ARRRTFAIIS…FFIEHAPPPQ (270 aa). Residues 18–25, 86–90, and 140–143 contribute to the GTP site; these read SHPDAGKT, DTPGH, and NKLD.

The protein belongs to the TRAFAC class translation factor GTPase superfamily. Classic translation factor GTPase family. PrfC subfamily.

It localises to the cytoplasm. In terms of biological role, increases the formation of ribosomal termination complexes and stimulates activities of RF-1 and RF-2. It binds guanine nucleotides and has strong preference for UGA stop codons. It may interact directly with the ribosome. The stimulation of RF-1 and RF-2 is significantly reduced by GTP and GDP, but not by GMP. This is Peptide chain release factor 3 from Xanthomonas oryzae pv. oryzae (strain MAFF 311018).